Consider the following 112-residue polypeptide: Protein lin-52 homolog (112 aa).

The protein belongs to the lin-52 family. As to quaternary structure, component of the DREAM complex. As to expression, expressed in the brain, liver and retina. Highly expressed in the retinal ganglion cell and inner nuclear layers at the parr stage. Expressed at a lower level in inner segments of some retinal photoreceptors.

Functionally, may be involved in retinal development. This chain is Protein lin-52 homolog (lin52), found in Oncorhynchus mykiss (Rainbow trout).